A 348-amino-acid chain; its full sequence is Rhodopsin (348 aa).

Met1 is subject to N-acetylmethionine. Over 1 to 36 (MNGTEGPNFYVPFSNKTGVVRSPFEFPQYYLAEPWQ) the chain is Extracellular. N-linked (GlcNAc...) asparagine glycans are attached at residues Asn2 and Asn15. The chain crosses the membrane as a helical span at residues 37–61 (FSMLAAYMFLLIVLGFPINFLTLYV). At 62-73 (TVQHKKLRTPLN) the chain is on the cytoplasmic side. The chain crosses the membrane as a helical span at residues 74-96 (YILLNLAVADLFMVFGGFTTTLY). The Extracellular segment spans residues 97-110 (TSLHGYFVFGPTGC). Cys110 and Cys187 are joined by a disulfide. The chain crosses the membrane as a helical span at residues 111–133 (NLEGFFATLGGEIALWSLVVLAI). Residues 134 to 136 (ERY) carry the 'Ionic lock' involved in activated form stabilization motif. The Cytoplasmic portion of the chain corresponds to 134–152 (ERYVVVCKPMSNFRFGENH). A helical membrane pass occupies residues 153–173 (AIMGVGFTWVMALACAAPPLV). The Extracellular portion of the chain corresponds to 174-202 (GWSRYIPEGMQCSCGIDYYTLKPEVNNES). Glu201 provides a ligand contact to Zn(2+). A helical membrane pass occupies residues 203-224 (FVIYMFVVHFTIPMIVIFFCYG). Over 225 to 252 (QLVFTVKEAAAQQQESATTQKAEKEVTR) the chain is Cytoplasmic. Residues 253–274 (MVIIMVIAFLICWVPYASVAFY) traverse the membrane as a helical segment. Over 275 to 286 (IFTHQGSNFGPI) the chain is Extracellular. Gln279 serves as a coordination point for Zn(2+). Residues 287-308 (FMTLPAFFAKAASIYNPVIYIM) traverse the membrane as a helical segment. Position 296 is an N6-(retinylidene)lysine (Lys296). Topologically, residues 309 to 348 (MNKQFRTCMITTLCCGKNPLGDDEVSASASKTETSQVAPA) are cytoplasmic. Residues Cys322 and Cys323 are each lipidated (S-palmitoyl cysteine). Residues 330 to 348 (DDEVSASASKTETSQVAPA) form an interaction with SAG region. Ser334 and Ser338 each carry phosphoserine. 2 positions are modified to phosphothreonine: Thr340 and Thr342. A Phosphoserine modification is found at Ser343.

The protein belongs to the G-protein coupled receptor 1 family. Opsin subfamily. In terms of assembly, homodimer. May form a complex composed of RHO, GRK1 and RCVRN in a Ca(2+)-dependent manner; RCVRN prevents the interaction between GRK1 and RHO. Interacts with GRK1. Interacts (phosphorylated form) with SAG. Interacts with GNAT1. Interacts with GNAT3. SAG and G-proteins compete for a common binding site. Interacts with PRCD; the interaction promotes PRCD stability. Forms a complex with ASAP1 and ARF4. Forms a complex with ASAP1, RAB11A, Rabin8/RAB3IP, ARF4 and RAB11FIP3; the complex regulates Golgi-to-cilia rhodopsin/RHO transport in photoreceptors. Post-translationally, phosphorylated on some or all of the serine and threonine residues present in the C-terminal region. In terms of processing, contains one covalently linked retinal chromophore. Upon light absorption, the covalently bound 11-cis-retinal is converted to all-trans-retinal. After hydrolysis of the Schiff base and release of the covalently bound all-trans-retinal, active rhodopsin is regenerated by binding of a fresh molecule of 11-cis-retinal.

The protein resides in the membrane. The protein localises to the cell projection. It is found in the cilium. It localises to the photoreceptor outer segment. Its function is as follows. Photoreceptor required for image-forming vision at low light intensity. Required for photoreceptor cell viability after birth. Light-induced isomerization of 11-cis to all-trans retinal triggers a conformational change that activates signaling via G-proteins. Subsequent receptor phosphorylation mediates displacement of the bound G-protein alpha subunit by the arrestin SAG and terminates signaling. In Phoca vitulina (Harbor seal), this protein is Rhodopsin (RHO).